The sequence spans 107 residues: uncharacterized protein (107 aa).

Residues 87–107 (KNRNGPKAEKRRPYVRAHAKW) form a disordered region.

This is an uncharacterized protein from Saccharomyces cerevisiae (strain ATCC 204508 / S288c) (Baker's yeast).